The following is a 1110-amino-acid chain: Serine/threonine-protein kinase PknK (1110 aa).

The 258-residue stretch at 26 to 283 (FDNVEEIGRG…TAADVGEELR (258 aa)) folds into the Protein kinase domain. Residues 32 to 40 (IGRGGFGVV) and lysine 55 contribute to the ATP site. The active-site Proton acceptor is aspartate 149. Positions 154 and 167 each coordinate Mg(2+). A phosphothreonine; by autocatalysis mark is found at threonine 179 and threonine 181. The tract at residues 308–343 (RSPEAHAAHRHTGGGTPTVPTPPTPATKYRPSVPTG) is disordered.

The protein belongs to the protein kinase superfamily. Ser/Thr protein kinase family. As to quaternary structure, forms oligomeric complexes in solution. In terms of processing, can autophosphorylate the carboxyl terminal region in addition to Thr-179 and Thr-181.

The protein localises to the cytoplasm. It is found in the cell membrane. It localises to the secreted. The protein resides in the cell wall. It catalyses the reaction L-seryl-[protein] + ATP = O-phospho-L-seryl-[protein] + ADP + H(+). The enzyme catalyses L-threonyl-[protein] + ATP = O-phospho-L-threonyl-[protein] + ADP + H(+). Functionally, key microbial factor involved in regulation of early and late events in tuberculosis infection, and in host-pathogen interactions. The chain is Serine/threonine-protein kinase PknK (pknK) from Mycobacterium tuberculosis (strain CDC 1551 / Oshkosh).